The chain runs to 176 residues: Large ribosomal subunit protein uL6 (176 aa).

The protein belongs to the universal ribosomal protein uL6 family. Part of the 50S ribosomal subunit.

Functionally, this protein binds to the 23S rRNA, and is important in its secondary structure. It is located near the subunit interface in the base of the L7/L12 stalk, and near the tRNA binding site of the peptidyltransferase center. The protein is Large ribosomal subunit protein uL6 of Burkholderia cenocepacia (strain HI2424).